The sequence spans 115 residues: U3-lycotoxin-Ls1a (115 aa).

Positions Met1–Ala20 are cleaved as a signal peptide. A propeptide spanning residues Glu21–Arg44 is cleaved from the precursor. 4 disulfides stabilise this stretch: Cys48-Cys63, Cys55-Cys72, Cys62-Cys87, and Cys74-Cys85.

It belongs to the neurotoxin 19 (CSTX) family. 01 subfamily. Expressed by the venom gland.

Its subcellular location is the secreted. This Lycosa singoriensis (Wolf spider) protein is U3-lycotoxin-Ls1a.